Here is a 181-residue protein sequence, read N- to C-terminus: U1 small nuclear ribonucleoprotein C (181 aa).

A Matrin-type zinc finger spans residues 2 to 34 (PKCDYCDVYLTHDSMSVRKAHNSGRNHLRNVVD). Composition is skewed to pro residues over residues 129–143 (PGMP…PGGL) and 150–174 (PIPP…PPPG). The disordered stretch occupies residues 129-181 (PGMPAGMPFPPPGGLPPNFQFPIPPPGGFPGMPPPGQGFPGMPPPGGNHDERR).

Belongs to the U1 small nuclear ribonucleoprotein C family. In terms of assembly, U1 snRNP is composed of the 7 core Sm proteins B/B', D1, D2, D3, E, F and G that assemble in a heptameric protein ring on the Sm site of the small nuclear RNA to form the core snRNP, and at least 3 U1 snRNP-specific proteins U1-70K, U1-A and U1-C. U1-C interacts with U1 snRNA and the 5' splice-site region of the pre-mRNA.

It localises to the nucleus. Functionally, component of the spliceosomal U1 snRNP, which is essential for recognition of the pre-mRNA 5' splice-site and the subsequent assembly of the spliceosome. U1-C is directly involved in initial 5' splice-site recognition for both constitutive and regulated alternative splicing. The interaction with the 5' splice-site seems to precede base-pairing between the pre-mRNA and the U1 snRNA. Stimulates commitment or early (E) complex formation by stabilizing the base pairing of the 5' end of the U1 snRNA and the 5' splice-site region. The protein is U1 small nuclear ribonucleoprotein C of Sclerotinia sclerotiorum (strain ATCC 18683 / 1980 / Ss-1) (White mold).